Consider the following 281-residue polypeptide: Small ribosomal subunit protein uS3 (281 aa).

The 69-residue stretch at 38-106 (IRRLLSTGLE…QVQLNILEVK (69 aa)) folds into the KH type-2 domain. The tract at residues 218-281 (APAGAERARR…VTHEPQIAES (64 aa)) is disordered. Positions 238 to 252 (SGAAGTTVTGTDAGR) are enriched in low complexity.

This sequence belongs to the universal ribosomal protein uS3 family. In terms of assembly, part of the 30S ribosomal subunit. Forms a tight complex with proteins S10 and S14.

Its function is as follows. Binds the lower part of the 30S subunit head. Binds mRNA in the 70S ribosome, positioning it for translation. The chain is Small ribosomal subunit protein uS3 from Mycobacterium leprae (strain TN).